The following is a 373-amino-acid chain: Mannan endo-1,4-beta-mannosidase A (373 aa).

The signal sequence occupies residues 1 to 17; the sequence is MKGLFAFGLGLLSLVNA. Residues Trp81, Asn193, and 194–196 each bind substrate; that span reads EPR. The Proton donor/acceptor role is filled by Glu194. The cysteines at positions 197 and 200 are disulfide-linked. 3 residues coordinate substrate: Glu230, Tyr267, and Trp271. Residues Cys289 and Cys296 are joined by a disulfide bond. Residue Glu300 is the Nucleophile of the active site. Cysteines 308 and 359 form a disulfide. Residue Trp332 coordinates substrate.

The protein belongs to the glycosyl hydrolase 5 (cellulase A) family. In terms of assembly, monomer. Post-translationally, not glycosylated.

It is found in the secreted. The enzyme catalyses Random hydrolysis of (1-&gt;4)-beta-D-mannosidic linkages in mannans, galactomannans and glucomannans.. In terms of biological role, endo-1,4-mannanase that catalyzes the random hydrolysis of (1-&gt;4)-beta-D-mannosidic linkages in mannans and heteromannans. It is a crucial enzyme for depolymerization of seed galactomannans and wood galactoglucomannans. Hydrolyzes structurally different mannan polysaccharides, such as galactomannans, glucomannans, and beta-1,4-mannans from different sources, yielding principally mannobiose. Also has transglycosylation activity. The protein is Mannan endo-1,4-beta-mannosidase A of Podospora anserina (strain S / ATCC MYA-4624 / DSM 980 / FGSC 10383) (Pleurage anserina).